The chain runs to 578 residues: Kelch-like protein 30 (578 aa).

A BTB domain is found at 33-100 (ADVTLLVGGR…VYTGRLTITQ (68 aa)). Residues 153–255 (KAWAFLRENF…EACRAALSQG (103 aa)) enclose the BACK domain. 6 Kelch repeats span residues 270–326 (VLVV…ALNN), 327–377 (NIYV…ALNG), 378–422 (EIYV…GCRG), 424–471 (LYLV…ALHG), 473–513 (LYLI…PLGD), and 514–563 (ALYV…TVFL).

The protein is Kelch-like protein 30 (KLHL30) of Homo sapiens (Human).